Consider the following 634-residue polypeptide: Poly(ribitol-phosphate) beta-glucosyltransferase (634 aa).

The protein belongs to the glycosyltransferase 2 family.

The catalysed reaction is 4-O-[(D-ribitylphospho)(n)-D-ribitylphospho-(2R)-glycerylphospho]-N-acetyl-beta-D-mannosaminyl-(1-&gt;4)-N-acetyl-alpha-D-glucosaminyl di-trans,octa-cis-undecaprenyl diphosphate + n UDP-alpha-D-glucose = 4-O-[(2-beta-D-glucosyl-D-ribitylphospho)(n)-D-ribitylphospho-(2R)-glycerylphospho]-N-acetyl-beta-D-mannosaminyl-(1-&gt;4)-N-acetyl-alpha-D-glucosaminyl di-trans,octa-cis-undecaprenyl diphosphate + n UDP + n H(+). It functions in the pathway cell wall biogenesis; poly(ribitol phosphate) teichoic acid biosynthesis. Functionally, attaches glucose residues to poly(RboP)-wall teichoic acids (WTAs). This is Poly(ribitol-phosphate) beta-glucosyltransferase from Bacillus spizizenii (strain ATCC 23059 / NRRL B-14472 / W23) (Bacillus subtilis subsp. spizizenii).